The sequence spans 368 residues: DNA replication and repair protein RecF (368 aa).

ATP is bound at residue 30–37; the sequence is GDNGAGKT.

The protein belongs to the RecF family.

It is found in the cytoplasm. In terms of biological role, the RecF protein is involved in DNA metabolism; it is required for DNA replication and normal SOS inducibility. RecF binds preferentially to single-stranded, linear DNA. It also seems to bind ATP. The chain is DNA replication and repair protein RecF from Xanthomonas euvesicatoria pv. vesicatoria (strain 85-10) (Xanthomonas campestris pv. vesicatoria).